The sequence spans 186 residues: UPF0200 protein Hbut_0338 (186 aa).

13 to 20 contributes to the ATP binding site; sequence GMPGSGKS.

This sequence belongs to the UPF0200 family.

In Hyperthermus butylicus (strain DSM 5456 / JCM 9403 / PLM1-5), this protein is UPF0200 protein Hbut_0338.